The sequence spans 198 residues: NADH-quinone oxidoreductase subunit B 1 (198 aa).

Positions 77, 78, 142, and 172 each coordinate [4Fe-4S] cluster.

The protein belongs to the complex I 20 kDa subunit family. NDH-1 is composed of 14 different subunits. Subunits NuoB, C, D, E, F, and G constitute the peripheral sector of the complex. The cofactor is [4Fe-4S] cluster.

Its subcellular location is the cell inner membrane. The catalysed reaction is a quinone + NADH + 5 H(+)(in) = a quinol + NAD(+) + 4 H(+)(out). NDH-1 shuttles electrons from NADH, via FMN and iron-sulfur (Fe-S) centers, to quinones in the respiratory chain. The immediate electron acceptor for the enzyme in this species is believed to be ubiquinone. Couples the redox reaction to proton translocation (for every two electrons transferred, four hydrogen ions are translocated across the cytoplasmic membrane), and thus conserves the redox energy in a proton gradient. The protein is NADH-quinone oxidoreductase subunit B 1 of Rhodopseudomonas palustris (strain ATCC BAA-98 / CGA009).